Reading from the N-terminus, the 135-residue chain is Large ribosomal subunit protein uL16c (135 aa).

It belongs to the universal ribosomal protein uL16 family. In terms of assembly, part of the 50S ribosomal subunit.

It is found in the plastid. It localises to the chloroplast. The protein is Large ribosomal subunit protein uL16c of Coffea arabica (Arabian coffee).